The following is a 257-amino-acid chain: Anamorsin homolog (257 aa).

Residues 1–134 (MSDRKNVLFV…KVGSSDKVTL (134 aa)) are N-terminal SAM-like domain. The linker stretch occupies residues 135–168 (NPEMKENVVSAWKLDDNNSETISEDDLLEADDLI). Positions 178, 187, 190, and 192 each coordinate [2Fe-2S] cluster. Positions 178–192 (CATTKKAKACKDCSC) are fe-S binding site A. Cys-218, Cys-221, Cys-229, and Cys-232 together coordinate [4Fe-4S] cluster. 2 short sequence motifs (cx2C motif) span residues 218–221 (CGSC) and 229–232 (CASC). Positions 218–232 (CGSCYLGDAFRCASC) are fe-S binding site B.

Belongs to the anamorsin family. Monomer. It depends on [2Fe-2S] cluster as a cofactor. The cofactor is [4Fe-4S] cluster.

It localises to the cytoplasm. The protein resides in the mitochondrion intermembrane space. Its function is as follows. Component of the cytosolic iron-sulfur (Fe-S) protein assembly (CIA) machinery. Required for the maturation of extramitochondrial Fe-S proteins. Part of an electron transfer chain functioning in an early step of cytosolic Fe-S biogenesis, facilitating the de novo assembly of a [4Fe-4S] cluster on the cytosolic Fe-S scaffold complex. Electrons are transferred from NADPH via a FAD- and FMN-containing diflavin oxidoreductase. Together with the diflavin oxidoreductase, also required for the assembly of the diferric tyrosyl radical cofactor of ribonucleotide reductase (RNR), probably by providing electrons for reduction during radical cofactor maturation in the catalytic small subunit. The chain is Anamorsin homolog from Acyrthosiphon pisum (Pea aphid).